Reading from the N-terminus, the 253-residue chain is Ubiquinone/menaquinone biosynthesis C-methyltransferase UbiE (253 aa).

Residues Thr76, Asp97, and 125-126 (NA) each bind S-adenosyl-L-methionine.

Belongs to the class I-like SAM-binding methyltransferase superfamily. MenG/UbiE family.

The catalysed reaction is a 2-demethylmenaquinol + S-adenosyl-L-methionine = a menaquinol + S-adenosyl-L-homocysteine + H(+). It catalyses the reaction a 2-methoxy-6-(all-trans-polyprenyl)benzene-1,4-diol + S-adenosyl-L-methionine = a 5-methoxy-2-methyl-3-(all-trans-polyprenyl)benzene-1,4-diol + S-adenosyl-L-homocysteine + H(+). It functions in the pathway quinol/quinone metabolism; menaquinone biosynthesis; menaquinol from 1,4-dihydroxy-2-naphthoate: step 2/2. The protein operates within cofactor biosynthesis; ubiquinone biosynthesis. In terms of biological role, methyltransferase required for the conversion of demethylmenaquinol (DMKH2) to menaquinol (MKH2) and the conversion of 2-polyprenyl-6-methoxy-1,4-benzoquinol (DDMQH2) to 2-polyprenyl-3-methyl-6-methoxy-1,4-benzoquinol (DMQH2). The protein is Ubiquinone/menaquinone biosynthesis C-methyltransferase UbiE of Stenotrophomonas maltophilia (strain R551-3).